A 293-amino-acid polypeptide reads, in one-letter code: Formamidopyrimidine-DNA glycosylase (293 aa).

Proline 2 serves as the catalytic Schiff-base intermediate with DNA. Glutamate 3 serves as the catalytic Proton donor. Catalysis depends on lysine 58, which acts as the Proton donor; for beta-elimination activity. Residues histidine 104, arginine 127, and arginine 170 each coordinate DNA. The segment at 257-293 (SVYGREGKPCRNPACGGTVERVVQSGRSTFFCASCQT) adopts an FPG-type zinc-finger fold. The Proton donor; for delta-elimination activity role is filled by arginine 283.

Belongs to the FPG family. Monomer. It depends on Zn(2+) as a cofactor.

The catalysed reaction is Hydrolysis of DNA containing ring-opened 7-methylguanine residues, releasing 2,6-diamino-4-hydroxy-5-(N-methyl)formamidopyrimidine.. It catalyses the reaction 2'-deoxyribonucleotide-(2'-deoxyribose 5'-phosphate)-2'-deoxyribonucleotide-DNA = a 3'-end 2'-deoxyribonucleotide-(2,3-dehydro-2,3-deoxyribose 5'-phosphate)-DNA + a 5'-end 5'-phospho-2'-deoxyribonucleoside-DNA + H(+). Involved in base excision repair of DNA damaged by oxidation or by mutagenic agents. Acts as a DNA glycosylase that recognizes and removes damaged bases. Has a preference for oxidized purines, such as 7,8-dihydro-8-oxoguanine (8-oxoG). Has AP (apurinic/apyrimidinic) lyase activity and introduces nicks in the DNA strand. Cleaves the DNA backbone by beta-delta elimination to generate a single-strand break at the site of the removed base with both 3'- and 5'-phosphates. This chain is Formamidopyrimidine-DNA glycosylase, found in Brucella ovis (strain ATCC 25840 / 63/290 / NCTC 10512).